Reading from the N-terminus, the 355-residue chain is Ataxin-3-like protein (355 aa).

A Josephin domain is found at Met1–Ile180. Cys14 functions as the Nucleophile in the catalytic mechanism. His119 functions as the Proton acceptor in the catalytic mechanism. Asn134 is an active-site residue. 2 disordered regions span residues Leu209–Gln230 and Leu253–Glu331. Over residues Glu215–Asp228 the composition is skewed to acidic residues. UIM domains lie at Gln224–Glu243 and Asp244–Ser258. Positions Leu253–Ser276 are enriched in polar residues. Positions Gln278 to Glu293 are enriched in basic and acidic residues.

In terms of tissue distribution, widely expressed.

It localises to the nucleus. It carries out the reaction Thiol-dependent hydrolysis of ester, thioester, amide, peptide and isopeptide bonds formed by the C-terminal Gly of ubiquitin (a 76-residue protein attached to proteins as an intracellular targeting signal).. In terms of biological role, deubiquitinating enzyme that cleaves both 'Lys-48'-linked and 'Lys-63'-linked poly-ubiquitin chains (in vitro). Acts as a deubiquitinating enzyme for the transcription factor KLF5, playing a role in the regulation of KLF5 stability. This chain is Ataxin-3-like protein, found in Homo sapiens (Human).